The chain runs to 196 residues: Guanylate kinase (196 aa).

Positions 8–189 (GKIIIISGPS…AADKLRHILY (182 aa)) constitute a Guanylate kinase-like domain. Position 15-22 (15-22 (GPSGVGKK)) interacts with ATP.

This sequence belongs to the guanylate kinase family.

It is found in the cytoplasm. The catalysed reaction is GMP + ATP = GDP + ADP. In terms of biological role, essential for recycling GMP and indirectly, cGMP. The protein is Guanylate kinase of Malacoplasma penetrans (strain HF-2) (Mycoplasma penetrans).